We begin with the raw amino-acid sequence, 299 residues long: Ribosomal protein L11 methyltransferase (299 aa).

S-adenosyl-L-methionine is bound by residues Thr139, Gly163, Asp185, and Asn232.

This sequence belongs to the methyltransferase superfamily. PrmA family.

The protein localises to the cytoplasm. It catalyses the reaction L-lysyl-[protein] + 3 S-adenosyl-L-methionine = N(6),N(6),N(6)-trimethyl-L-lysyl-[protein] + 3 S-adenosyl-L-homocysteine + 3 H(+). Functionally, methylates ribosomal protein L11. In Crocosphaera subtropica (strain ATCC 51142 / BH68) (Cyanothece sp. (strain ATCC 51142)), this protein is Ribosomal protein L11 methyltransferase.